We begin with the raw amino-acid sequence, 141 residues long: D-aminoacyl-tRNA deacylase (141 aa).

The Gly-cisPro motif, important for rejection of L-amino acids signature appears at G133–P134.

Belongs to the DTD family. Homodimer.

The protein resides in the cytoplasm. The enzyme catalyses glycyl-tRNA(Ala) + H2O = tRNA(Ala) + glycine + H(+). It carries out the reaction a D-aminoacyl-tRNA + H2O = a tRNA + a D-alpha-amino acid + H(+). Its function is as follows. An aminoacyl-tRNA editing enzyme that deacylates mischarged D-aminoacyl-tRNAs. Also deacylates mischarged glycyl-tRNA(Ala), protecting cells against glycine mischarging by AlaRS. Acts via tRNA-based rather than protein-based catalysis; rejects L-amino acids rather than detecting D-amino acids in the active site. By recycling D-aminoacyl-tRNA to D-amino acids and free tRNA molecules, this enzyme counteracts the toxicity associated with the formation of D-aminoacyl-tRNA entities in vivo and helps enforce protein L-homochirality. The polypeptide is D-aminoacyl-tRNA deacylase (Kineococcus radiotolerans (strain ATCC BAA-149 / DSM 14245 / SRS30216)).